The chain runs to 559 residues: MELSRSAAWSALVFHKHEVDKKTMRDMFAGDSDRFVKFSLSWKEMLLDYSKNRITSRTMELLLELAHSAGVDEKRQQMFQGAPINFTENRSVLHTALRRPPGYVLEVDGLNIGDEIAGVLFQMKNFCEKVISGKWKGYTGKSITDVVNIGIGGSDLGPYMVTEALKPFAHGGLDVHFVSNIDGTHIRETLKRLDPETTLFIIASKTFTTQETLTNAMSAREWFLARAVEEEYIKKHFAAVSTNQEKVVEFGIDDANMFRFWDWVGGRYSLWSSIGLSIALYLGFNRFEELLAGAHAMDEHFLNEPFNRNIPVILALLGIWYRNFFDAASHAVIPYDQYLHRFPAYLQQLDMESNGKRVDENGHTVTHATGPVIWGEPGTNAQHAFFQLLHQGPDLIPADFIVPLKSQNPSGEHHDMLLANCFAQTEALMKGKTEQEVRAELSDAGYDEADIQKLFQHKVFSGNRPTNTILVHELNPFMLGSLIAMYEHKVFVQGVIWRINSFDQWGVELGKQLARTILPEIQSAEAVTAHDASTNALINMARTFREENIRKESAQLSFF.

Glu-352 (proton donor) is an active-site residue. Active-site residues include His-383 and Lys-511.

The protein belongs to the GPI family.

The protein localises to the cytoplasm. The enzyme catalyses alpha-D-glucose 6-phosphate = beta-D-fructose 6-phosphate. The protein operates within carbohydrate biosynthesis; gluconeogenesis. It participates in carbohydrate degradation; glycolysis; D-glyceraldehyde 3-phosphate and glycerone phosphate from D-glucose: step 2/4. In terms of biological role, catalyzes the reversible isomerization of glucose-6-phosphate to fructose-6-phosphate. This is Glucose-6-phosphate isomerase from Chlorobium phaeobacteroides (strain DSM 266 / SMG 266 / 2430).